Here is a 660-residue protein sequence, read N- to C-terminus: MKQRSFLSILCFILLAFGVASVSAQTCIENRKYFTPNGTYDSNRRLILSSLPNNTASQDGFYYGSIGEEQDRVYALGMCIPRSTPSDCFNCIKGAAGWLIQDCVNQTDAYYWALDPTLCLVRYSNISFSGSAAFWEIEPQYLVLNTATIASDLTDFKNIWEDLTSRTITAASAARSTPSSSDNHYRVDFANLTKFQNIYALMQCTPDISSDECNNCLQRGVLEYQSCCGNNTGGYVMRPICFFRWQLFTFSKAFHNITLATPPKPPMNVPRPPSVGHGANTTDNDSRGVSAGIVVVITVPAVVIVLILVVLGFFICWRRKSLQRTEFESDSDVSTTNSLQYEFKTIEAATNKFSKSNKLGEGRFGEVYKGKFSNGTEVAVKRLSKVSGQDTKKFRNEAVLVSKIQHRNLARLLGFCLQGDGKFLIYEFVLNKSLDYFLFDPEKQGELDWTRRYKIIGGIAQGILHLHQDPQLTIIYRDFKASNILLDADMNPKISDFGMATVFGMEESRGNTNWIAETFVYMSPEYAVHGKFSMKSDVYSFGILILEIISGKKNSSLYQNDETTTAGNLVTYAWRLWRNGSQLKLLDSSIGRNYQSNEVTRCIHIALLCVQENPEDRPKLSTIVSMLTSNTISVPAPGIPGFFPQSRRELDPLSEGLESG.

The first 24 residues, 1–24, serve as a signal peptide directing secretion; sequence MKQRSFLSILCFILLAFGVASVSA. Gnk2-homologous domains are found at residues 25–128 and 137–250; these read QTCI…NISF and IEPQ…LFTF. At 25–294 the chain is on the extracellular side; sequence QTCIENRKYF…DSRGVSAGIV (270 aa). N37, N53, N105, N125, N191, N230, and N256 each carry an N-linked (GlcNAc...) asparagine glycan. Over residues 264 to 273 the composition is skewed to pro residues; sequence KPPMNVPRPP. Residues 264–283 are disordered; it reads KPPMNVPRPPSVGHGANTTD. Residues N280 and N284 are each glycosylated (N-linked (GlcNAc...) asparagine). A helical transmembrane segment spans residues 295 to 315; it reads VVITVPAVVIVLILVVLGFFI. Residues 316-660 lie on the Cytoplasmic side of the membrane; that stretch reads CWRRKSLQRT…DPLSEGLESG (345 aa). The 280-residue stretch at 353-632 folds into the Protein kinase domain; it reads FSKSNKLGEG…IVSMLTSNTI (280 aa). ATP-binding positions include 359–367 and K381; that span reads LGEGRFGEV. Residue Y426 is modified to Phosphotyrosine. The active-site Proton acceptor is D478. S482 is modified (phosphoserine). T518 is modified (phosphothreonine). Y526 carries the phosphotyrosine modification.

It belongs to the protein kinase superfamily. Ser/Thr protein kinase family. CRK subfamily.

It is found in the membrane. It catalyses the reaction L-seryl-[protein] + ATP = O-phospho-L-seryl-[protein] + ADP + H(+). The catalysed reaction is L-threonyl-[protein] + ATP = O-phospho-L-threonyl-[protein] + ADP + H(+). The chain is Cysteine-rich receptor-like protein kinase 22 (CRK22) from Arabidopsis thaliana (Mouse-ear cress).